The primary structure comprises 255 residues: Wtf element wtf15 (255 aa).

The segment at 19–78 is disordered; the sequence is KAGHEIDLEGSPPSEHNSEEKSTLPSNSDILTSANPVSQASETPDHSIESNTGSTQSPTS. Composition is skewed to polar residues over residues 41–60 and 67–78; these read TLPS…QASE and ESNTGSTQSPTS. Transmembrane regions (helical) follow at residues 85 to 105, 112 to 132, 162 to 182, and 187 to 208; these read FSFC…CVLP, FLIA…SGSI, FLKT…LVLL, and WGWK…SFCL.

It belongs to the WTF family.

The protein resides in the spore membrane. In terms of biological role, may act in meiotic drive. The sequence is that of Wtf element wtf15 from Schizosaccharomyces pombe (strain 972 / ATCC 24843) (Fission yeast).